Consider the following 112-residue polypeptide: Putative UPF0320 protein YEL074W (112 aa).

Residues 93–112 (EKSPSKSPKHKNILPFNFTK) form a disordered region.

The protein belongs to the UPF0320 family.

This is Putative UPF0320 protein YEL074W from Saccharomyces cerevisiae (strain ATCC 204508 / S288c) (Baker's yeast).